The chain runs to 161 residues: Anther-specific protein LAT52 (161 aa).

Positions 1-17 (MAKAIVLLSALCILALA) are cleaved as a signal peptide. 3 disulfides stabilise this stretch: Cys-35–Cys-106, Cys-38–Cys-147, and Cys-59–Cys-94. An N-linked (GlcNAc...) asparagine glycan is attached at Asn-61.

Belongs to the Ole e I family. Expressed in anthers and pollen.

May play a role during germination or early tube growth. This Solanum lycopersicum (Tomato) protein is Anther-specific protein LAT52 (LAT52).